The primary structure comprises 1702 residues: Immunoglobulin A1 protease autotransporter (1702 aa).

Residues 1-25 (MLNKKFKLNFIALTVAYALTPYTEA) form the signal peptide. The Peptidase S6 domain occupies 26 to 332 (ALVRDDVDYQ…NIYKPEFAKT (307 aa)). Serine 288 is an active-site residue. The segment at 991–1411 (VEKRNQTVDT…GSDRSTVALR (421 aa)) is disordered. Positions 997 to 1021 (TVDTTNITTPNNIQADVPSVPSNNE) are enriched in polar residues. Positions 1037 to 1047 (TPSETTETVAE) are enriched in low complexity. Basic and acidic residues predominate over residues 1049-1061 (SKQESKTVEKNEQ). Residues 1082–1095 (KANTQTNEVAQSGS) are compositionally biased toward polar residues. 2 stretches are compositionally biased toward basic and acidic residues: residues 1104–1132 (EIKETAKVEKEEKAKVEKEEKAKVEKDEI) and 1150–1162 (APKEVSTDTKVEE). 2 consecutive repeat copies span residues 1109–1116 (AKVEKEEK) and 1117–1124 (AKVEKEEK). Residues 1109 to 1124 (AKVEKEEKAKVEKEEK) form a 2 X 8 AA tandem repeats of A-K-V-E-K-E-E-K region. Polar residues-rich tracts occupy residues 1163-1186 (TQVQAQPQTQSTTVAAAEATSPNS) and 1207-1218 (VSKNQTENTTDQ). Over residues 1219–1234 (PTEREKTAKVETEKTQ) the composition is skewed to basic and acidic residues. Polar residues-rich tracts occupy residues 1235–1255 (EPPQVASQASPKQEQSETVQP), 1263–1305 (NVPT…TAIT), and 1316–1341 (TETAASTEDASQHKANTVADNSVANN). Low complexity predominate over residues 1360 to 1378 (ETSAEETTAASTDETTIAD). The segment covering 1382–1392 (RSKPNRRSRRS) has biased composition (basic residues). The 253-residue stretch at 1450-1702 (NNEGQYNVWV…TAELKLSFSF (253 aa)) folds into the Autotransporter domain.

It is found in the periplasm. Its subcellular location is the secreted. The protein localises to the cell surface. It localises to the cell outer membrane. The catalysed reaction is Cleavage of immunoglobulin A molecules at certain Pro-|-Xaa bonds in the hinge region. No small molecule substrates are known.. Its function is as follows. Virulence factor; cleaves host immunoglobulin A producing intact Fc and Fab fragments. The protein is Immunoglobulin A1 protease autotransporter (iga) of Haemophilus influenzae.